A 498-amino-acid polypeptide reads, in one-letter code: Galactose-1-phosphate uridylyltransferase (498 aa).

Belongs to the galactose-1-phosphate uridylyltransferase type 2 family.

Its subcellular location is the cytoplasm. The enzyme catalyses alpha-D-galactose 1-phosphate + UDP-alpha-D-glucose = alpha-D-glucose 1-phosphate + UDP-alpha-D-galactose. It functions in the pathway carbohydrate metabolism; galactose metabolism. This is Galactose-1-phosphate uridylyltransferase from Latilactobacillus sakei subsp. sakei (strain 23K) (Lactobacillus sakei subsp. sakei).